A 54-amino-acid chain; its full sequence is Ovomucoid (54 aa).

In terms of domain architecture, Kazal-like spans 4-54; that stretch reads VDCSDYPKPACSLDYMPLCGSDSKTYSNKCNFCNAVVDSNGTLTLSHFEKC. Disulfide bonds link cysteine 6–cysteine 36, cysteine 14–cysteine 33, and cysteine 22–cysteine 54. Asparagine 43 carries an N-linked (GlcNAc...) asparagine glycan.

It is found in the secreted. This Chroicocephalus ridibundus (Black-headed gull) protein is Ovomucoid.